The primary structure comprises 109 residues: Hainantoxin-XVIII-7 (109 aa).

The first 18 residues, 1–18 (MKLSIIIIATSLVIAVVA), serve as a signal peptide directing secretion. Residues 19-46 (FPSKDSKAIENDKTEQRMEIVVQETARA) constitute a propeptide that is removed on maturation. Intrachain disulfides connect Cys47/Cys62, Cys55/Cys68, Cys59/Cys108, and Cys61/Cys81.

This sequence belongs to the neurotoxin 25 family. F7 subfamily. In terms of tissue distribution, expressed by the venom gland.

It is found in the secreted. Functionally, putative ion channel inhibitor. This Cyriopagopus hainanus (Chinese bird spider) protein is Hainantoxin-XVIII-7.